The chain runs to 491 residues: 23S rRNA (uracil(1939)-C(5))-methyltransferase RlmD (491 aa).

Residues 1 to 10 show a composition bias toward basic and acidic residues; it reads MSDPTEHPEI. The interval 1–28 is disordered; that stretch reads MSDPTEHPEILQDPSSSAPVQGRTDLPP. Residues 18–81 enclose the TRAM domain; it reads APVQGRTDLP…NNWEQASLTA (64 aa). Residues Cys94, Cys104, Cys107, and Cys186 each contribute to the [4Fe-4S] cluster site. Residues Gln294, Phe323, Asn328, Glu344, Asn379, and Asp400 each contribute to the S-adenosyl-L-methionine site. Cys447 acts as the Nucleophile in catalysis.

This sequence belongs to the class I-like SAM-binding methyltransferase superfamily. RNA M5U methyltransferase family. RlmD subfamily.

It catalyses the reaction uridine(1939) in 23S rRNA + S-adenosyl-L-methionine = 5-methyluridine(1939) in 23S rRNA + S-adenosyl-L-homocysteine + H(+). Its function is as follows. Catalyzes the formation of 5-methyl-uridine at position 1939 (m5U1939) in 23S rRNA. In Paracidovorax citrulli (strain AAC00-1) (Acidovorax citrulli), this protein is 23S rRNA (uracil(1939)-C(5))-methyltransferase RlmD.